We begin with the raw amino-acid sequence, 124 residues long: MSSPAPSTSHNAANSTQAFSLKTRRPIDEDDLLTAEDREAKSTVEKLDCATRRRACKNCTCGRAELERQLEAGGSQVMGAMPPGGCGNCAKGDAFRCAGCPYLGMPAFDNAVDGKVKLDLTDDI.

The segment covering 1-20 has biased composition (polar residues); it reads MSSPAPSTSHNAANSTQAFS. 2 disordered regions span residues 1–39 and 40–124; these read MSSP…EDRE and AKST…TDDI. Positions 49, 56, 59, and 61 each coordinate [2Fe-2S] cluster. Residues 49–61 are fe-S binding site A; that stretch reads CATRRRACKNCTC. The [4Fe-4S] cluster site is built by Cys86, Cys89, Cys97, and Cys100. 2 short sequence motifs (cx2C motif) span residues 86 to 89 and 97 to 100; these read CGNC and CAGC. Residues 86-100 form a fe-S binding site B region; the sequence is CGNCAKGDAFRCAGC.

This sequence belongs to the anamorsin family. In terms of assembly, monomer. [2Fe-2S] cluster serves as cofactor. It depends on [4Fe-4S] cluster as a cofactor.

The protein resides in the cytoplasm. The protein localises to the mitochondrion intermembrane space. Its function is as follows. Component of the cytosolic iron-sulfur (Fe-S) protein assembly (CIA) machinery. Required for the maturation of extramitochondrial Fe-S proteins. Part of an electron transfer chain functioning in an early step of cytosolic Fe-S biogenesis, facilitating the de novo assembly of a [4Fe-4S] cluster on the cytosolic Fe-S scaffold complex. Electrons are transferred from NADPH via a FAD- and FMN-containing diflavin oxidoreductase. Together with the diflavin oxidoreductase, also required for the assembly of the diferric tyrosyl radical cofactor of ribonucleotide reductase (RNR), probably by providing electrons for reduction during radical cofactor maturation in the catalytic small subunit. The polypeptide is Anamorsin homolog (Trypanosoma brucei brucei (strain 927/4 GUTat10.1)).